An 833-amino-acid polypeptide reads, in one-letter code: Leucine--tRNA ligase (833 aa).

The short motif at 41–52 (PYPSGAGLHVGH) is the 'HIGH' region element. The 'KMSKS' region signature appears at 610 to 614 (KMSKS). ATP is bound at residue lysine 613.

The protein belongs to the class-I aminoacyl-tRNA synthetase family.

The protein localises to the cytoplasm. The catalysed reaction is tRNA(Leu) + L-leucine + ATP = L-leucyl-tRNA(Leu) + AMP + diphosphate. The protein is Leucine--tRNA ligase of Streptococcus pneumoniae (strain Hungary19A-6).